We begin with the raw amino-acid sequence, 346 residues long: UDP-N-acetylenolpyruvoylglucosamine reductase (346 aa).

The FAD-binding PCMH-type domain occupies 22–194 (GFDVRARFAC…TSVTFRLPKV (173 aa)). Arginine 170 is a catalytic residue. Serine 246 acts as the Proton donor in catalysis. Residue glutamate 342 is part of the active site.

Belongs to the MurB family. FAD is required as a cofactor.

The protein resides in the cytoplasm. The enzyme catalyses UDP-N-acetyl-alpha-D-muramate + NADP(+) = UDP-N-acetyl-3-O-(1-carboxyvinyl)-alpha-D-glucosamine + NADPH + H(+). It functions in the pathway cell wall biogenesis; peptidoglycan biosynthesis. In terms of biological role, cell wall formation. In Paraburkholderia xenovorans (strain LB400), this protein is UDP-N-acetylenolpyruvoylglucosamine reductase.